Consider the following 110-residue polypeptide: G antigen 2E (110 aa).

The disordered stretch occupies residues 1 to 110 (MSWRGRSTYY…NPEEVKTPEE (110 aa)). Acidic residues-rich tracts occupy residues 32 to 45 (FSDE…EEGE) and 87 to 96 (ECEDGPDGQE).

This sequence belongs to the GAGE family.

The sequence is that of G antigen 2E (GAGE2E) from Homo sapiens (Human).